Here is a 110-residue protein sequence, read N- to C-terminus: Large ribosomal subunit protein uL22 (110 aa).

The protein belongs to the universal ribosomal protein uL22 family. In terms of assembly, part of the 50S ribosomal subunit.

Its function is as follows. This protein binds specifically to 23S rRNA; its binding is stimulated by other ribosomal proteins, e.g. L4, L17, and L20. It is important during the early stages of 50S assembly. It makes multiple contacts with different domains of the 23S rRNA in the assembled 50S subunit and ribosome. The globular domain of the protein is located near the polypeptide exit tunnel on the outside of the subunit, while an extended beta-hairpin is found that lines the wall of the exit tunnel in the center of the 70S ribosome. This is Large ribosomal subunit protein uL22 from Shewanella loihica (strain ATCC BAA-1088 / PV-4).